The following is a 565-amino-acid chain: Nephrocystin-1 (565 aa).

Residues 1-32 (GEEEDEEEEEEEESEEGGGEEEESEEEEEEKQ) are compositionally biased toward acidic residues. Disordered regions lie at residues 1-46 (GEEE…KEYI) and 95-132 (VEPY…KQRT). A coiled-coil region spans residues 2–48 (EEEDEEEEEEEESEEGGGEEEESEEEEEEKQENESHHQATSKEYIAV). Ser14 is subject to Phosphoserine. The region spanning 40–100 (ATSKEYIAVG…PRTYVEPYNK (61 aa)) is the SH3 domain. The segment covering 104 to 118 (QDTSEEEDSEEDVEV) has biased composition (acidic residues). At Tyr182 the chain carries Phosphotyrosine; by FAK2. The residue at position 554 (Tyr554) is a Phosphotyrosine; by SRC.

The protein belongs to the nephrocystin-1 family. Interacts with Crk-associated substrate BCAR1, NPHP4, PTK2B/PYK2 and tensin. Interacts with INVS and NPHP3. Interacts with AHI1 and TNK2. Interacts with NPHP4 in a complex containing NPHP1, NPHP4 and RPGRIP1L/NPHP8. Interacts with IQCB1; the interaction likely requires additional interactors. Interacts with KIF7. Interacts with ANKS3. Interacts with SPATA7. Interacts with FLNA. In terms of tissue distribution, expressed in renal cells (at protein level).

The protein resides in the cell junction. It localises to the adherens junction. The protein localises to the cell projection. Its subcellular location is the cilium. It is found in the cytoplasm. The protein resides in the cytoskeleton. It localises to the cilium axoneme. The protein localises to the tight junction. Functionally, together with BCAR1 it may play a role in the control of epithelial cell polarity. Involved in the organization of apical junctions in kidney cells together with NPHP4 and RPGRIP1L/NPHP8. Does not seem to be strictly required for ciliogenesis. Seems to help to recruit PTK2B/PYK2 to cell matrix adhesions, thereby initiating phosphorylation of PTK2B/PYK2 and PTK2B/PYK2-dependent signaling. May play a role in the regulation of intraflagellar transport (IFT) during cilia assembly. Required for normal retina development. In connecting photoreceptor cilia influences the movement of some IFT proteins such as IFT88 and WDR19. Involved in spermatogenesis. The polypeptide is Nephrocystin-1 (NPHP1) (Canis lupus familiaris (Dog)).